Here is a 254-residue protein sequence, read N- to C-terminus: Small ribosomal subunit protein uS2 (254 aa).

Belongs to the universal ribosomal protein uS2 family.

The polypeptide is Small ribosomal subunit protein uS2 (Brucella ovis (strain ATCC 25840 / 63/290 / NCTC 10512)).